The sequence spans 968 residues: RNA polymerase-associated protein RapA (968 aa).

The 170-residue stretch at 163–332 folds into the Helicase ATP-binding domain; it reads EVGRRYAPRV…FARLRLLDPD (170 aa). 176 to 183 is a binding site for ATP; sequence DEVGLGKT. A DEAH box motif is present at residues 278 to 281; that stretch reads DEAH. The Helicase C-terminal domain occupies 491–655; it reads RVDWLIEFLK…EFAEDLLNVL (165 aa).

It belongs to the SNF2/RAD54 helicase family. RapA subfamily. As to quaternary structure, interacts with the RNAP. Has a higher affinity for the core RNAP than for the holoenzyme. Its ATPase activity is stimulated by binding to RNAP.

Functionally, transcription regulator that activates transcription by stimulating RNA polymerase (RNAP) recycling in case of stress conditions such as supercoiled DNA or high salt concentrations. Probably acts by releasing the RNAP, when it is trapped or immobilized on tightly supercoiled DNA. Does not activate transcription on linear DNA. Probably not involved in DNA repair. The protein is RNA polymerase-associated protein RapA of Shewanella baltica (strain OS155 / ATCC BAA-1091).